A 257-amino-acid polypeptide reads, in one-letter code: 5'-nucleotidase SurE (257 aa).

The a divalent metal cation site is built by Asp-11, Asp-12, Ser-42, and Asn-99.

It belongs to the SurE nucleotidase family. A divalent metal cation is required as a cofactor.

It localises to the cytoplasm. It carries out the reaction a ribonucleoside 5'-phosphate + H2O = a ribonucleoside + phosphate. In terms of biological role, nucleotidase that shows phosphatase activity on nucleoside 5'-monophosphates. The sequence is that of 5'-nucleotidase SurE from Flavobacterium psychrophilum (strain ATCC 49511 / DSM 21280 / CIP 103535 / JIP02/86).